The following is a 393-amino-acid chain: Formate-dependent phosphoribosylglycinamide formyltransferase (393 aa).

N(1)-(5-phospho-beta-D-ribosyl)glycinamide is bound by residues 22–23 (EL) and glutamate 82. ATP is bound by residues arginine 114, lysine 155, 160–165 (SSGHGQ), 195–198 (EGFV), and glutamate 203. The region spanning 119-308 (RLAAEELGLP…EFALHARAIL (190 aa)) is the ATP-grasp domain. 2 residues coordinate Mg(2+): glutamate 267 and glutamate 279. N(1)-(5-phospho-beta-D-ribosyl)glycinamide is bound by residues aspartate 286, lysine 356, and 363 to 364 (RR).

Belongs to the PurK/PurT family. As to quaternary structure, homodimer.

The enzyme catalyses N(1)-(5-phospho-beta-D-ribosyl)glycinamide + formate + ATP = N(2)-formyl-N(1)-(5-phospho-beta-D-ribosyl)glycinamide + ADP + phosphate + H(+). Its pathway is purine metabolism; IMP biosynthesis via de novo pathway; N(2)-formyl-N(1)-(5-phospho-D-ribosyl)glycinamide from N(1)-(5-phospho-D-ribosyl)glycinamide (formate route): step 1/1. Functionally, involved in the de novo purine biosynthesis. Catalyzes the transfer of formate to 5-phospho-ribosyl-glycinamide (GAR), producing 5-phospho-ribosyl-N-formylglycinamide (FGAR). Formate is provided by PurU via hydrolysis of 10-formyl-tetrahydrofolate. In Pasteurella multocida (strain Pm70), this protein is Formate-dependent phosphoribosylglycinamide formyltransferase.